The sequence spans 159 residues: Globin-like protein (159 aa).

Residues 1-152 (MSMNRQEISD…FNAESQTHLK (152 aa)) form the Globin domain. His-101 lines the heme pocket.

The protein belongs to the globin family. In terms of assembly, homodimer. As to expression, expressed mainly in a subset of neuronal cells and in head muscular tissue.

It is found in the cytoplasm. Its function is as follows. May be a globin and may play a role in oxygen transport. The polypeptide is Globin-like protein (glb-1) (Caenorhabditis elegans).